Here is a 371-residue protein sequence, read N- to C-terminus: Carlactonoate CLA methyltransferase (371 aa).

Tyrosine 21 contributes to the S-adenosyl-L-homocysteine binding site. Glutamine 28 provides a ligand contact to (11R)-carlactonoate. S-adenosyl-L-homocysteine is bound by residues cysteine 62, asparagine 67, aspartate 101, leucine 102, serine 141, and phenylalanine 142. (11R)-carlactonoate contacts are provided by histidine 162 and tryptophan 163. Residues asparagine 180, aspartate 266, tyrosine 268, and aspartate 269 each coordinate Mg(2+).

Belongs to the methyltransferase superfamily. Type-7 methyltransferase family. SABATH subfamily. In terms of assembly, homodimer. Mg(2+) is required as a cofactor.

It catalyses the reaction (11R)-carlactonoate + S-adenosyl-L-methionine = (11R)-methyl carlactonoate + S-adenosyl-L-homocysteine. Its function is as follows. Methyltransferase involved in the biosynthesis of strigolactone natural products, bioactive compounds promoting plant fitness and soil microbe interactions, but preventing shoot branching. Catalyzes the biosynthesis of (11R)-methyl carlactonoate (MeCLA) from (11R)-carlactonoate (CLA), downstream of MAX1; MeCLA is probably biologically active as a hormone regulating shoot branching and serves as a precursor of non-canonical strigolactones (SLs). The polypeptide is Carlactonoate CLA methyltransferase (Arabidopsis thaliana (Mouse-ear cress)).